Reading from the N-terminus, the 89-residue chain is MSFQLTLFSMLFLLIAVVVGQPIQSQNGDLKMQAVQDNSPLNMEAFNDDSALYDYLEQSDPSLKSMEKRWANQVRFGKRASWASSVRFG.

A signal peptide spans 1-20; the sequence is MSFQLTLFSMLFLLIAVVVG. A propeptide spanning residues 21 to 67 is cleaved from the precursor; that stretch reads QPIQSQNGDLKMQAVQDNSPLNMEAFNDDSALYDYLEQSDPSLKSME. The residue at position 76 (phenylalanine 76) is a Phenylalanine amide. A propeptide spanning residues 80–89 is cleaved from the precursor; sequence ASWASSVRFG.

It belongs to the FARP (FMRFamide related peptide) family. In terms of tissue distribution, each flp gene is expressed in a distinct set of neurons. Flp-19 is expressed in the URX interneurons, the serotonin and acetylcholine-expressing HSN neurons, and the AIN, AWA and BAG neurons.

The protein resides in the secreted. Functionally, FMRFamides and FMRFamide-like peptides are neuropeptides. WANQVRF-amide inhibits the activity of dissected pharyngeal myogenic muscle system. The polypeptide is FMRFamide-like neuropeptides 19 (Caenorhabditis elegans).